Here is a 208-residue protein sequence, read N- to C-terminus: Large ribosomal subunit protein uL4 (208 aa).

The disordered stretch occupies residues 46-97 (QGTHKTKTRAEVRGGGKKPYRQKGTGNARQGSSRSPIMVGGGTIFGPQPRSY). A compositionally biased stretch (polar residues) spans 69 to 80 (GTGNARQGSSRS).

It belongs to the universal ribosomal protein uL4 family. Part of the 50S ribosomal subunit.

In terms of biological role, one of the primary rRNA binding proteins, this protein initially binds near the 5'-end of the 23S rRNA. It is important during the early stages of 50S assembly. It makes multiple contacts with different domains of the 23S rRNA in the assembled 50S subunit and ribosome. Its function is as follows. Forms part of the polypeptide exit tunnel. This chain is Large ribosomal subunit protein uL4, found in Chlorobaculum parvum (strain DSM 263 / NCIMB 8327) (Chlorobium vibrioforme subsp. thiosulfatophilum).